Here is a 110-residue protein sequence, read N- to C-terminus: MTDTLSRLAEVLESRKDAAADSSYVASLYHKGLNKILEKLGEESIETIIAAKDAAVSGDCSDVIYETADLWFHSMVMLAALGQHPQAVLDELDRRFGLSGHAEKAARTAE.

It belongs to the PRA-PH family.

The protein localises to the cytoplasm. The enzyme catalyses 1-(5-phospho-beta-D-ribosyl)-ATP + H2O = 1-(5-phospho-beta-D-ribosyl)-5'-AMP + diphosphate + H(+). It participates in amino-acid biosynthesis; L-histidine biosynthesis; L-histidine from 5-phospho-alpha-D-ribose 1-diphosphate: step 2/9. This Pseudomonas savastanoi pv. phaseolicola (strain 1448A / Race 6) (Pseudomonas syringae pv. phaseolicola (strain 1448A / Race 6)) protein is Phosphoribosyl-ATP pyrophosphatase.